The chain runs to 932 residues: Isoleucine--tRNA ligase (932 aa).

Residues 57 to 67 carry the 'HIGH' region motif; sequence PYANGDIHIGT. Residue Glu-559 coordinates L-isoleucyl-5'-AMP. The 'KMSKS' region signature appears at 600–604; it reads KMSKS. Residue Lys-603 coordinates ATP. Zn(2+)-binding residues include Cys-899, Cys-902, Cys-919, and Cys-922.

It belongs to the class-I aminoacyl-tRNA synthetase family. IleS type 1 subfamily. Monomer. It depends on Zn(2+) as a cofactor.

Its subcellular location is the cytoplasm. The enzyme catalyses tRNA(Ile) + L-isoleucine + ATP = L-isoleucyl-tRNA(Ile) + AMP + diphosphate. In terms of biological role, catalyzes the attachment of isoleucine to tRNA(Ile). As IleRS can inadvertently accommodate and process structurally similar amino acids such as valine, to avoid such errors it has two additional distinct tRNA(Ile)-dependent editing activities. One activity is designated as 'pretransfer' editing and involves the hydrolysis of activated Val-AMP. The other activity is designated 'posttransfer' editing and involves deacylation of mischarged Val-tRNA(Ile). The protein is Isoleucine--tRNA ligase of Caldanaerobacter subterraneus subsp. tengcongensis (strain DSM 15242 / JCM 11007 / NBRC 100824 / MB4) (Thermoanaerobacter tengcongensis).